A 559-amino-acid polypeptide reads, in one-letter code: MPSIKSDIEIARAAAKKPIFEIGAKLGIPVEQLVPYGHDKAKVSAEFIAAQAGKKDGKLILVTAINPTPAGEGKTTTTVGLGDGLNRIGKKAVVCIREASLGPCFGVKGGAAGGGYAQVVPMEDINLHFTGDFHAITSAHNLLAAMIDNHIYWGNEENIDIRRITWRRVMDMNDRALRSMVLSLGGVANGFPRQGGFDITVASEVMAILCLATDLKDLERRLGDIIIGYRFDRTPVHARDLKADGAMAVLLKDAMQPNLVQTLENNPAFVHGGPFANIAHGCNSVTATKTALKLGDYVVTEAGFGADLGAEKFFDIKCRKAGLKPDAAVIVATVRALKMNGGVKKDDLGTEDVAALKKGCANLGRHVANVRRFGVPVVVAINHFVSDTDAEIAAVKEFVSRLGAEAILCRHWALGSAGIEDLAHKVVELAESGQAKFQPLYGDDLSLFEKIEIVASKIYHAGEVTADKAVRDQLQTWEEQGYGKLPICMAKTQYSFSTDPNLRGAPEGHIVTVREVRLSAGAGFVVAITGEIMTMPGLPKSPSAERIFLNDQGYIEGLF.

Thr68–Thr75 contacts ATP.

Belongs to the formate--tetrahydrofolate ligase family.

The catalysed reaction is (6S)-5,6,7,8-tetrahydrofolate + formate + ATP = (6R)-10-formyltetrahydrofolate + ADP + phosphate. It participates in one-carbon metabolism; tetrahydrofolate interconversion. This chain is Formate--tetrahydrofolate ligase, found in Rhizobium johnstonii (strain DSM 114642 / LMG 32736 / 3841) (Rhizobium leguminosarum bv. viciae).